Consider the following 141-residue polypeptide: Protein Turandot Z (141 aa).

An N-terminal signal peptide occupies residues 1-23 (MYFAIRLSFVLAVLFCLTGNGNA).

The protein belongs to the Turandot family.

The protein localises to the secreted. In terms of biological role, a humoral factor that may play a role in stress tolerance. This chain is Protein Turandot Z, found in Drosophila yakuba (Fruit fly).